The chain runs to 203 residues: Superoxide dismutase [Mn] (203 aa).

Residues H31, H79, D161, and H165 each contribute to the Mn(2+) site.

The protein belongs to the iron/manganese superoxide dismutase family. It depends on Mn(2+) as a cofactor.

The catalysed reaction is 2 superoxide + 2 H(+) = H2O2 + O2. Destroys superoxide anion radicals which are normally produced within the cells and which are toxic to biological systems. The protein is Superoxide dismutase [Mn] (sod) of Haloarcula marismortui (strain ATCC 43049 / DSM 3752 / JCM 8966 / VKM B-1809) (Halobacterium marismortui).